Reading from the N-terminus, the 93-residue chain is U12-lycotoxin-Ls1d (93 aa).

The N-terminal stretch at Met1–Ser18 is a signal peptide. A propeptide spanning residues Glu19 to Arg38 is cleaved from the precursor.

The protein belongs to the neurotoxin 31 family. Contains 5 disulfide bonds. In terms of tissue distribution, expressed by the venom gland.

The protein resides in the secreted. The protein is U12-lycotoxin-Ls1d of Lycosa singoriensis (Wolf spider).